The chain runs to 282 residues: Predicted GPI-anchored protein 23 (282 aa).

The N-terminal stretch at 1–18 is a signal peptide; that stretch reads MRVSTLVLSTSIIPIATA. The interval 163–264 is disordered; that stretch reads GQETSGAGSL…SSNSSSSAGM (102 aa). N-linked (GlcNAc...) asparagine glycans are attached at residues asparagine 180, asparagine 192, and asparagine 257. A compositionally biased stretch (gly residues) spans 186 to 216; it reads GGSGSSNGTSSGSGSGSGAGVGSGSGSGSGS. Positions 236 to 264 are enriched in low complexity; that stretch reads LGISSSISQSTTRQLQTSGSSNSSSSAGM. Serine 259 carries the GPI-anchor amidated serine lipid modification. Positions 260–282 are cleaved as a propeptide — removed in mature form; sequence SSAGMGNVVVGMNAVALAALVLI.

Its subcellular location is the cell membrane. Probable cell surface protein involved in the process of adhesion and early events of invasion. In Candida albicans (strain SC5314 / ATCC MYA-2876) (Yeast), this protein is Predicted GPI-anchored protein 23 (PGA23).